The following is a 468-amino-acid chain: MDFGLQPPEITSGEMYLGPGAGPMLAAAVAWDGLAAELQSMAASYASIVEGMASESWLGPSSAGMAAAAAPYVTWMSGTSAQAKAAADQARAAVVAYETAFAAVVPPPQIAANRSQLISLVATNIFGQNTAAIAATEAEYGEMWAQDTMAMFGYASSSATASRLTPFTAPPQTTNPSGLAGQAAATGQATALASGTNAVTTALSSAAAQFPFDIIPTLLQGLATLSTQYTQLMGQLINAIFGPTGATTYQNLFVTAANVTKFSTWANDAMSAPNLGMTEFKVFWQPPPAPEIPKSSLGAGLGLRSGLSAGLAHAASAGLGQANLVGDLSVPPSWASATPAVRLVANTLPATSLAAAPATQIPANLLGQMALGSMTGGALGAAAPAIYTGSGARARANGGTPSAEPVKLEAVIAQLQKQPDAVRHWNVDKADLDGLLDRLSKQPGIHAVHVSNGDKPKVALPDTQLGSH.

The disordered stretch occupies residues 447-468 (AVHVSNGDKPKVALPDTQLGSH).

It belongs to the mycobacterial PPE family.

This is an uncharacterized protein from Mycobacterium tuberculosis (strain CDC 1551 / Oshkosh).